The sequence spans 92 residues: Putative septation protein SpoVG (92 aa).

It belongs to the SpoVG family.

Its function is as follows. Could be involved in septation. This is Putative septation protein SpoVG from Thermoanaerobacter sp. (strain X514).